A 248-amino-acid chain; its full sequence is 2,3-dihydro-2,3-dihydroxybenzoate dehydrogenase (248 aa).

Residue 9–33 (WVTGAGKGIGYATALAFVEAGAKVT) coordinates NAD(+). Serine 131 is a substrate binding site. Tyrosine 144 (proton acceptor) is an active-site residue.

Belongs to the short-chain dehydrogenases/reductases (SDR) family. Homotetramer; dimer of dimers. EntA and EntE interact together.

The catalysed reaction is (2S,3S)-2,3-dihydroxy-2,3-dihydrobenzoate + NAD(+) = 2,3-dihydroxybenzoate + NADH + H(+). It participates in siderophore biosynthesis; enterobactin biosynthesis. Inhibited by cis-2-hydroxy-3-cyclohexen-1-carboxylate, cis-2-hydroxycyclohexane-1-carboxylate and trans-2-hydroxycyclohexane-1-carboxylate. Its function is as follows. Involved in the biosynthesis of the siderophore enterobactin (enterochelin), which is a macrocyclic trimeric lactone of N-(2,3-dihydroxybenzoyl)-serine. Catalyzes the reversible NAD-dependent oxidation of the C3-hydroxyl group of 2,3-dihydro-2,3-dihydroxybenzoate (2,3-diDHB), producing the transient intermediate 2-hydroxy-3-oxo-4,6-cyclohexadiene-1-carboxylate, which undergoes rapid aromatization to the final product, 2,3-dihydroxybenzoate (2,3-DHB). Only the compounds with a C3-hydroxyl group such as methyl 2,3-dihydro-2,3-dihydroxybenzoate, methyl-3-hydroxy-1,4-cyclohexadiene-1-carboxylate, trans-3-hydroxy-2-cyclohexene-1-carboxylate, cis-3-hydroxy-4-cyclohexene-1-carboxylate, cis-3-hydroxycyclohexane-1-carboxylic acid are oxidized to the corresponding ketone products. The stereospecificity of the C3 allylic alcohol group oxidation is 3R in a 1R,3R dihydro substrate. It can also increase the DHB-AMP ligase activity of EntE by interaction EntE. This chain is 2,3-dihydro-2,3-dihydroxybenzoate dehydrogenase, found in Escherichia coli (strain K12).